The following is a 77-amino-acid chain: Large ribosomal subunit protein uL29 (77 aa).

Belongs to the universal ribosomal protein uL29 family.

In Corynebacterium jeikeium (strain K411), this protein is Large ribosomal subunit protein uL29.